Reading from the N-terminus, the 533-residue chain is MFQFHAGSWESWCCCCCLIPGDRPWDRGRRWRLEMADTRSVHETRFEAAVKVIQSLPKNGSFQPTNEMMLKFYSFYKQATEGPCKLSKPGFWDPVGRYKWDAWSSLGDMTKEEAMIAYVEEMKKILETMPMTEKVEELLHVIGPFYEIVEDKKSGRSSDLTSVRLEKISKCLEDLGNVLASTPNAKTVNGKAESSDSGAESEEEAAQEDPKRPEPRDSDKKMMKKSADHKNLEIIVTNGYDKDSFVQGVQNSIHTSPSLNGRCTEEVKSVDENLEQTGKTVVFVHQDVNSDHVEDISGIQHLTSDSDSEVYCDSMEQFGQEESLDGFISNNGPFSYYLGGNPSQPLESSGFPEAVQGLPGNGSPEDMQGAVVEGKGEVKRGGEDGGSNSGAPHREKRAGESEEFSNIRRGRGHRMQHLSEGSKGRQVGSGGDGERWGSDRGSRGSLNEQIALVLMRLQEDMQNVLQRLHKLEMLAASQAKSSALQTSNQPTSPRPSWWPFEMSPGALTFAIIWPFIAQWLVHLYYQRRRRKLN.

Residues 42–131 (HETRFEAAVK…MKKILETMPM (90 aa)) form the ACB domain. An acyl-CoA-binding positions include 53–62 (IQSLPKNGSF), 73–77 (YSFYK), K99, and Y118. The disordered stretch occupies residues 182–227 (TPNAKTVNGKAESSDSGAESEEEAAQEDPKRPEPRDSDKKMMKKSA). Phosphoserine is present on residues S194, S195, S197, and S201. Residues 208-227 (EDPKRPEPRDSDKKMMKKSA) show a composition bias toward basic and acidic residues. Phosphoserine occurs at positions 244 and 314. The segment at 339-443 (GGNPSQPLES…ERWGSDRGSR (105 aa)) is disordered. The segment covering 374 to 383 (GKGEVKRGGE) has biased composition (basic and acidic residues). S429 is modified (phosphoserine). Residues 432–442 (DGERWGSDRGS) are compositionally biased toward basic and acidic residues. A coiled-coil region spans residues 448–478 (EQIALVLMRLQEDMQNVLQRLHKLEMLAASQ). K470 is subject to N6-acetyllysine. A helical transmembrane segment spans residues 503-525 (SPGALTFAIIWPFIAQWLVHLYY).

It belongs to the ATG37 family. As to expression, highly expressed in brain and liver. Lower levels of expression in spleen and heart.

Its subcellular location is the peroxisome membrane. Functionally, acyl-CoA binding protein which acts as the peroxisome receptor for pexophagy but is dispensable for aggrephagy and nonselective autophagy. Binds medium- and long-chain acyl-CoA esters. The polypeptide is Acyl-CoA-binding domain-containing protein 5 (ACBD5) (Bos taurus (Bovine)).